The following is a 923-amino-acid chain: ATP-dependent Clp protease ATP-binding subunit ClpA homolog CD4B, chloroplastic (923 aa).

A Clp R domain is found at 92-234 (FERFTEKAIK…RTQVIRMVGE (143 aa)). Repeat regions lie at residues 95–160 (FTEK…IGRG) and 170–234 (FTPR…MVGE). Residues 255 to 502 (LEEYGTNLTK…RVRLRHAQLP (248 aa)) form an i region. 300-307 (GEPGVGKT) serves as a coordination point for ATP. In terms of domain architecture, UVR spans 509–544 (EKELRQITKEKNEAVRGQDFEKAGELRDREMDLKAQ). Positions 569 to 760 (VTEADIQHIV…LLIMTSNVGS (192 aa)) are II. 643 to 650 (GPTGVGKS) provides a ligand contact to ATP.

The protein belongs to the ClpA/ClpB family.

It is found in the plastid. The protein resides in the chloroplast. Its function is as follows. May interact with a ClpP-like protease involved in degradation of denatured proteins in the chloroplast. This is ATP-dependent Clp protease ATP-binding subunit ClpA homolog CD4B, chloroplastic (CD4B) from Solanum lycopersicum (Tomato).